The following is a 536-amino-acid chain: Phosphoenolpyruvate carboxykinase (ATP) (536 aa).

Positions 61, 195, and 201 each coordinate substrate. ATP is bound by residues K201, H220, and G236–T244. Mn(2+) contacts are provided by K201 and H220. D257 is a binding site for Mn(2+). 3 residues coordinate ATP: E285, R322, and T447. A substrate-binding site is contributed by R322.

This sequence belongs to the phosphoenolpyruvate carboxykinase (ATP) family. Mn(2+) serves as cofactor.

Its subcellular location is the cytoplasm. It carries out the reaction oxaloacetate + ATP = phosphoenolpyruvate + ADP + CO2. Its pathway is carbohydrate biosynthesis; gluconeogenesis. In terms of biological role, involved in the gluconeogenesis. Catalyzes the conversion of oxaloacetate (OAA) to phosphoenolpyruvate (PEP) through direct phosphoryl transfer between the nucleoside triphosphate and OAA. The chain is Phosphoenolpyruvate carboxykinase (ATP) from Brucella melitensis biotype 1 (strain ATCC 23456 / CCUG 17765 / NCTC 10094 / 16M).